Reading from the N-terminus, the 932-residue chain is Glycine dehydrogenase (decarboxylating) (932 aa).

At Lys685 the chain carries N6-(pyridoxal phosphate)lysine.

It belongs to the GcvP family. The glycine cleavage system is composed of four proteins: P, T, L and H. Requires pyridoxal 5'-phosphate as cofactor.

It catalyses the reaction N(6)-[(R)-lipoyl]-L-lysyl-[glycine-cleavage complex H protein] + glycine + H(+) = N(6)-[(R)-S(8)-aminomethyldihydrolipoyl]-L-lysyl-[glycine-cleavage complex H protein] + CO2. Its function is as follows. The glycine cleavage system catalyzes the degradation of glycine. The P protein binds the alpha-amino group of glycine through its pyridoxal phosphate cofactor; CO(2) is released and the remaining methylamine moiety is then transferred to the lipoamide cofactor of the H protein. The sequence is that of Glycine dehydrogenase (decarboxylating) from Brucella melitensis biotype 1 (strain ATCC 23456 / CCUG 17765 / NCTC 10094 / 16M).